Here is a 567-residue protein sequence, read N- to C-terminus: Proline--tRNA ligase (567 aa).

It belongs to the class-II aminoacyl-tRNA synthetase family. ProS type 1 subfamily. As to quaternary structure, homodimer.

It localises to the cytoplasm. It carries out the reaction tRNA(Pro) + L-proline + ATP = L-prolyl-tRNA(Pro) + AMP + diphosphate. Functionally, catalyzes the attachment of proline to tRNA(Pro) in a two-step reaction: proline is first activated by ATP to form Pro-AMP and then transferred to the acceptor end of tRNA(Pro). As ProRS can inadvertently accommodate and process non-cognate amino acids such as alanine and cysteine, to avoid such errors it has two additional distinct editing activities against alanine. One activity is designated as 'pretransfer' editing and involves the tRNA(Pro)-independent hydrolysis of activated Ala-AMP. The other activity is designated 'posttransfer' editing and involves deacylation of mischarged Ala-tRNA(Pro). The misacylated Cys-tRNA(Pro) is not edited by ProRS. This chain is Proline--tRNA ligase, found in Staphylococcus aureus (strain USA300).